A 358-amino-acid chain; its full sequence is UDP-N-acetylglucosamine--N-acetylmuramyl-(pentapeptide) pyrophosphoryl-undecaprenol N-acetylglucosamine transferase (358 aa).

UDP-N-acetyl-alpha-D-glucosamine is bound by residues 11 to 13, Asn125, Arg162, Ser196, and Gln288; that span reads TAG.

This sequence belongs to the glycosyltransferase 28 family. MurG subfamily.

The protein resides in the cell membrane. It carries out the reaction di-trans,octa-cis-undecaprenyl diphospho-N-acetyl-alpha-D-muramoyl-L-alanyl-D-glutamyl-meso-2,6-diaminopimeloyl-D-alanyl-D-alanine + UDP-N-acetyl-alpha-D-glucosamine = di-trans,octa-cis-undecaprenyl diphospho-[N-acetyl-alpha-D-glucosaminyl-(1-&gt;4)]-N-acetyl-alpha-D-muramoyl-L-alanyl-D-glutamyl-meso-2,6-diaminopimeloyl-D-alanyl-D-alanine + UDP + H(+). It functions in the pathway cell wall biogenesis; peptidoglycan biosynthesis. Cell wall formation. Catalyzes the transfer of a GlcNAc subunit on undecaprenyl-pyrophosphoryl-MurNAc-pentapeptide (lipid intermediate I) to form undecaprenyl-pyrophosphoryl-MurNAc-(pentapeptide)GlcNAc (lipid intermediate II). The chain is UDP-N-acetylglucosamine--N-acetylmuramyl-(pentapeptide) pyrophosphoryl-undecaprenol N-acetylglucosamine transferase from Leifsonia xyli subsp. xyli (strain CTCB07).